The chain runs to 433 residues: Glucose-6-phosphate isomerase (433 aa).

The Proton donor role is filled by Glu285. Active-site residues include His306 and Lys421.

The protein belongs to the GPI family.

The protein resides in the cytoplasm. It carries out the reaction alpha-D-glucose 6-phosphate = beta-D-fructose 6-phosphate. The protein operates within carbohydrate biosynthesis; gluconeogenesis. Its pathway is carbohydrate degradation; glycolysis; D-glyceraldehyde 3-phosphate and glycerone phosphate from D-glucose: step 2/4. In terms of biological role, catalyzes the reversible isomerization of glucose-6-phosphate to fructose-6-phosphate. This chain is Glucose-6-phosphate isomerase, found in Mycoplasma mobile (strain ATCC 43663 / 163K / NCTC 11711) (Mesomycoplasma mobile).